Reading from the N-terminus, the 344-residue chain is Programmed cell death protein 2 (344 aa).

Positions 135, 138, 146, 149, 155, 159, 168, and 172 each coordinate Zn(2+). An MYND-type; atypical zinc finger spans residues 135-172 (CRVCGCSGPKRCSRCHKAHYCSKEHQSLDWRLGHKQAC).

In terms of processing, ubiquitinated by PRKN, promoting proteasomal degradation.

It is found in the nucleus. May be a DNA-binding protein with a regulatory function. May play an important role in cell death and/or in regulation of cell proliferation. In Bos taurus (Bovine), this protein is Programmed cell death protein 2 (PDCD2).